Here is a 411-residue protein sequence, read N- to C-terminus: ATP-dependent RNA helicase eIF4A (411 aa).

The segment at 1 to 23 (MSKPEDTSAAAAAPAGEAGNNLN) is disordered. Low complexity predominate over residues 9–19 (AAAAAPAGEAG). The short motif at 38–66 (DNFDNMELKEELLRGVYAYGFERPSAIQA) is the Q motif element. Positions 69–239 (IVPVIKGHDV…KKFMRDPIRI (171 aa)) constitute a Helicase ATP-binding domain. ATP is bound at residue 82–89 (AQSGTGKT). Positions 187 to 190 (DEAD) match the DEAD box motif. The 162-residue stretch at 250–411 (GIKQFYVAVE…EMPLNVADLI (162 aa)) folds into the Helicase C-terminal domain.

The protein belongs to the DEAD box helicase family. eIF4A subfamily. In terms of assembly, component of the eIF4F complex, which composition varies with external and internal environmental conditions. It is composed of at least eIF4A, eIF4E and eIF4G.

It is found in the cytoplasm. The catalysed reaction is ATP + H2O = ADP + phosphate + H(+). Its function is as follows. ATP-dependent RNA helicase which is a subunit of the eIF4F complex involved in cap recognition and is required for mRNA binding to ribosome. In the current model of translation initiation, eIF4A unwinds RNA secondary structures in the 5'-UTR of mRNAs which is necessary to allow efficient binding of the small ribosomal subunit, and subsequent scanning for the initiator codon. The polypeptide is ATP-dependent RNA helicase eIF4A (TIF1) (Mycosarcoma maydis (Corn smut fungus)).